A 196-amino-acid chain; its full sequence is Histone H1.0 (196 aa).

Disordered regions lie at residues 1-29 and 78-196; these read MTEN…PKYS and SGTL…GRKK. In terms of domain architecture, H15 spans 24–97; sequence DHPKYSDMIL…GASGSFRLAK (74 aa). Residues 104 to 196 are compositionally biased toward basic residues; that stretch reads PAKKPKKEIK…ASPKKSGRKK (93 aa).

Belongs to the histone H1/H5 family.

The protein localises to the nucleus. It is found in the chromosome. In terms of biological role, histones H1 are necessary for the condensation of nucleosome chains into higher-order structures. The histones H1.0 are found in cells that are in terminal stages of differentiation or that have low rates of cell division. This is Histone H1.0 (h1-0) from Xenopus tropicalis (Western clawed frog).